The sequence spans 197 residues: Phospholipid hydroperoxide glutathione peroxidase (197 aa).

Ser40 bears the Phosphoserine mark. Sec73 is an active-site residue. Position 73 (Sec73) is a non-standard amino acid, selenocysteine.

The protein belongs to the glutathione peroxidase family. Monomer. Has a tendency to form higher mass oligomers. Interacts with FUNDC1; this interaction promotes GPX4 recruitment into mitochondria through TOM/TIM complex where it is degraded by mitophagy.

It localises to the mitochondrion. It is found in the cytoplasm. It carries out the reaction a hydroperoxy polyunsaturated fatty acid + 2 glutathione = a hydroxy polyunsaturated fatty acid + glutathione disulfide + H2O. It catalyses the reaction 2 glutathione + H2O2 = glutathione disulfide + 2 H2O. The catalysed reaction is tert-butyl hydroperoxide + 2 glutathione = tert-butanol + glutathione disulfide + H2O. The enzyme catalyses cumene hydroperoxide + 2 glutathione = 2-phenylpropan-2-ol + glutathione disulfide + H2O. It carries out the reaction (9S)-hydroperoxy-(10E,12Z)-octadecadienoate + 2 glutathione = (9S)-hydroxy-(10E,12Z)-octadecadienoate + glutathione disulfide + H2O. It catalyses the reaction (13S)-hydroperoxy-(9Z,11E)-octadecadienoate + 2 glutathione = (13S)-hydroxy-(9Z,11E)-octadecadienoate + glutathione disulfide + H2O. The catalysed reaction is (5S)-hydroperoxy-(6E,8Z,11Z,14Z)-eicosatetraenoate + 2 glutathione = (5S)-hydroxy-(6E,8Z,11Z,14Z)-eicosatetraenoate + glutathione disulfide + H2O. The enzyme catalyses (12R)-hydroperoxy-(5Z,8Z,10E,14Z)-eicosatetraenoate + 2 glutathione = (12R)-hydroxy-(5Z,8Z,10E,14Z)-eicosatetraenoate + glutathione disulfide + H2O. It carries out the reaction (12S)-hydroperoxy-(5Z,8Z,10E,14Z)-eicosatetraenoate + 2 glutathione = (12S)-hydroxy-(5Z,8Z,10E,14Z)-eicosatetraenoate + glutathione disulfide + H2O. It catalyses the reaction (15S)-hydroperoxy-(5Z,8Z,11Z,13E)-eicosatetraenoate + 2 glutathione = (15S)-hydroxy-(5Z,8Z,11Z,13E)-eicosatetraenoate + glutathione disulfide + H2O. The catalysed reaction is (5S)-hydroperoxy-(6E,8Z,11Z,14Z,17Z)-eicosapentaenoate + 2 glutathione = (5S)-hydroxy-(6E,8Z,11Z,14Z,17Z)-eicosapentaenoate + glutathione disulfide + H2O. The enzyme catalyses (12S)-hydroperoxy-(5Z,8Z,10E,14Z,17Z)-eicosapentaenoate + 2 glutathione = (12S)-hydroxy-(5Z,8Z,10E,14Z,17Z)-eicosapentaenoate + glutathione disulfide + H2O. It carries out the reaction (15S)-hydroperoxy-(5Z,8Z,11Z,13E,17Z)-eicosapentaenoate + 2 glutathione = (15S)-hydroxy-(5Z,8Z,11Z,13E,17Z)-eicosapentaenoate + glutathione disulfide + H2O. It catalyses the reaction (15S)-hydroperoxy-(11Z,13E)-eicosadienoate + 2 glutathione = (15S)-hydroxy-(11Z,13E)-eicosadienoate + glutathione disulfide + H2O. The catalysed reaction is (17S)-hydroperoxy-(4Z,7Z,10Z,13Z,15E,19Z)-docosahexaenoate + 2 glutathione = (17S)-hydroxy-(4Z,7Z,10Z,13Z,15E,19Z)-docosahexaenoate + glutathione disulfide + H2O. The enzyme catalyses a hydroperoxy-1,2-diacyl-glycero-3-phosphocholine + 2 glutathione = a hydroxy-1,2-diacyl-glycero-3-phosphocholine + glutathione disulfide + H2O. Essential antioxidant peroxidase that directly reduces phospholipid hydroperoxide even if they are incorporated in membranes and lipoproteins. Can also reduce fatty acid hydroperoxide, cholesterol hydroperoxide and thymine hydroperoxide. Plays a key role in protecting cells from oxidative damage by preventing membrane lipid peroxidation. Required to prevent cells from ferroptosis, a non-apoptotic cell death resulting from an iron-dependent accumulation of lipid reactive oxygen species. The presence of selenocysteine (Sec) versus Cys at the active site is essential for life: it provides resistance to overoxidation and prevents cells against ferroptosis. The presence of Sec at the active site is also essential for the survival of a specific type of parvalbumin-positive interneurons, thereby preventing against fatal epileptic seizures. May be required to protect cells from the toxicity of ingested lipid hydroperoxides. Required for normal sperm development and male fertility. Essential for maturation and survival of photoreceptor cells. Plays a role in a primary T-cell response to viral and parasitic infection by protecting T-cells from ferroptosis and by supporting T-cell expansion. Plays a role of glutathione peroxidase in platelets in the arachidonic acid metabolism. Reduces hydroperoxy ester lipids formed by a 15-lipoxygenase that may play a role as down-regulator of the cellular 15-lipoxygenase pathway. Can also reduce small soluble hydroperoxides such as H2O2, cumene hydroperoxide and tert-butyl hydroperoxide. The protein is Phospholipid hydroperoxide glutathione peroxidase of Sus scrofa (Pig).